The sequence spans 1168 residues: DNA-directed RNA polymerase subunit beta (1168 aa).

Belongs to the RNA polymerase beta chain family. The RNAP catalytic core consists of 2 alpha, 1 beta, 1 beta' and 1 omega subunit. When a sigma factor is associated with the core the holoenzyme is formed, which can initiate transcription.

The catalysed reaction is RNA(n) + a ribonucleoside 5'-triphosphate = RNA(n+1) + diphosphate. Functionally, DNA-dependent RNA polymerase catalyzes the transcription of DNA into RNA using the four ribonucleoside triphosphates as substrates. This chain is DNA-directed RNA polymerase subunit beta, found in Rhodococcus opacus (strain B4).